The following is a 311-amino-acid chain: Giardin subunit gamma (311 aa).

A coiled-coil region spans residues 185–233; sequence GLQTEINSLEAIIEREFAQAANRLNQEVSNFKESFDASERNIKLQKKHV.

In terms of assembly, interacts with EB1.

The protein localises to the cytoplasm. It is found in the cytoskeleton. Giardins are involved in parasite attachment to the intestinal mucosa and in the cytoskeletal disassembly and reassembly that marks the transition from infectious trophozoite to transmissible cyst. They may interact with other cytoskeletal proteins such as microtubules in the microribbons or crossbridges, to maintain the integrity of the ventral disk. Involved in formation of the ventral disk. This is Giardin subunit gamma from Giardia intestinalis (Giardia lamblia).